Reading from the N-terminus, the 143-residue chain is Hemoglobin subunit alpha (143 aa).

Serine 2 is subject to N-acetylserine. Positions 2–143 (SLSDKDKSAV…VALALAEKYR (142 aa)) constitute a Globin domain. Residue histidine 60 coordinates O2. Residue histidine 89 participates in heme b binding.

It belongs to the globin family. Heterotetramer of two alpha chains and two beta chains. In terms of tissue distribution, red blood cells.

Its function is as follows. Involved in oxygen transport from gills to the various peripheral tissues. This chain is Hemoglobin subunit alpha (hba), found in Pogonophryne scotti (Saddleback plunderfish).